A 2108-amino-acid chain; its full sequence is Mucin-5B (2108 aa).

An N-terminal signal peptide occupies residues 1–21 (MEIKKERSFWIFCLIWSFCKG). The VWFD 1 domain maps to 36-203 (SECTTWGNFH…KVEDPSEKCP (168 aa)). Intrachain disulfides connect Cys-38-Cys-166 and Cys-60-Cys-202. The interval 196–219 (EDPSEKCPDVRPDDHTGRHPTEDD) is disordered. A TIL 1 domain is found at 304–360 (CPSNMEYMECGNSCADTCADPERSKICKAPCTDGCFCPPGTILDDLGGKKCVPRDSC). N-linked (GlcNAc...) (complex) asparagine glycosylation occurs at Asn-381. One can recognise a VWFD 2 domain in the interval 398 to 570 (GSCSIDGGFH…NSWKTRASCF (173 aa)). 3 cysteine pairs are disulfide-bonded: Cys-400–Cys-534, Cys-422–Cys-569, and Cys-443–Cys-451. N-linked (GlcNAc...) (complex) asparagine glycosylation is found at Asn-528, Asn-599, Asn-680, and Asn-772. Residues 666–723 (CPETMVYNYSVKYCNQSCRSLDEPDPLCKVQIAPMEGCGCPEGTYLNDEEECVTPDDC) form the TIL 2 domain. One can recognise a TIL 3 domain in the interval 782-825 (GSECQKSCKTQDMHCYVTECVSGCMCPDGLVLDGSGGCIPKDQC). One can recognise a VWFC 1 domain in the interval 825-897 (CPCVHGGHFY…DYILAQDFCP (73 aa)). Asn-855 carries an N-linked (GlcNAc...) (complex) asparagine glycan. In terms of domain architecture, VWFD 3 spans 863–1033 (GTCTVYGNGH…NSWKITSTCS (171 aa)). 4 disulfides stabilise this stretch: Cys-865/Cys-997, Cys-887/Cys-1032, Cys-896/Cys-994, and Cys-914/Cys-921. Residues Asn-1036, Asn-1219, Asn-1371, and Asn-1452 are each glycosylated (N-linked (GlcNAc...) (complex) asparagine). The region spanning 1429 to 1613 (CICSGWGNEH…APVSTNRYCN (185 aa)) is the VWFD 4 domain. 3 cysteine pairs are disulfide-bonded: Cys-1431–Cys-1573, Cys-1453–Cys-1612, and Cys-1477–Cys-1485. Asn-1567, Asn-1639, Asn-1792, Asn-1807, and Asn-1841 each carry an N-linked (GlcNAc...) (complex) asparagine glycan. The 72-residue stretch at 1761 to 1832 (CGCTAQDGSV…DPCCTETVCE (72 aa)) folds into the VWFC 2 domain. The region spanning 1870–1937 (GVCVSEGVEF…KEGQCCSQCQ (68 aa)) is the VWFC 3 domain. Residue Asn-1964 is glycosylated (N-linked (GlcNAc...) (complex) asparagine). 4 cysteine pairs are disulfide-bonded: Cys-2010–Cys-2066, Cys-2031–Cys-2080, Cys-2042–Cys-2096, and Cys-2046–Cys-2098. A CTCK domain is found at 2010-2104 (CIDLPHKCKR…ECGCVETKCP (95 aa)).

Homomultimer; disulfide-linked. The N- and C-terminus mediate their assembly into higher order structures to form filaments. The CTCK domains of two polypeptides associate in the endoplasmic reticulum to generate intermolecularly disulfide-bonded dimers. These dimers progress to the Golgi apparatus, which is a more acidic environment than the endoplasmic reticulum. Under acidic conditions, the N-termini form non-covalent intermolecular interactions that juxtapose assemblies from different CTCK-linked dimers to produce long, disulfide-linked polymers that remain highly compact until secretion. In terms of processing, N-glycosylated. Complex glycosylation with bisecting N-acetylglucosamine. Contains mainly N-acetylglucosamine (3.1-8.5%), mannose (2.9-4.6%), a small amount of galactose (1.1-4.35) and sialic acid (0.3-1.3%). Most abundant glycan is composed of a GlcNAc(2)Man(3) core, a bisecting GlcNAc and another 3 GlcNAc antannae located on the mannoses of the core. Site Asn-1639 exists both in glycosylated and non-glycosylated forms.

Its subcellular location is the secreted. In terms of biological role, ovomucin, the glycoprotein responsible for the gel properties of egg white, is composed for 2 subunits, alpha-ovomucin/MUC5B and beta-ovomucin/MUC6. This Gallus gallus (Chicken) protein is Mucin-5B (MUC5B).